Consider the following 345-residue polypeptide: N-acetyl-gamma-glutamyl-phosphate reductase (345 aa).

Residue cysteine 149 is part of the active site.

It belongs to the NAGSA dehydrogenase family. Type 1 subfamily.

It localises to the cytoplasm. The catalysed reaction is N-acetyl-L-glutamate 5-semialdehyde + phosphate + NADP(+) = N-acetyl-L-glutamyl 5-phosphate + NADPH + H(+). The protein operates within amino-acid biosynthesis; L-arginine biosynthesis; N(2)-acetyl-L-ornithine from L-glutamate: step 3/4. Its function is as follows. Catalyzes the NADPH-dependent reduction of N-acetyl-5-glutamyl phosphate to yield N-acetyl-L-glutamate 5-semialdehyde. This is N-acetyl-gamma-glutamyl-phosphate reductase from Bacillus thuringiensis subsp. konkukian (strain 97-27).